A 75-amino-acid polypeptide reads, in one-letter code: Exodeoxyribonuclease 7 small subunit (75 aa).

The protein belongs to the XseB family. Heterooligomer composed of large and small subunits.

The protein resides in the cytoplasm. The enzyme catalyses Exonucleolytic cleavage in either 5'- to 3'- or 3'- to 5'-direction to yield nucleoside 5'-phosphates.. Functionally, bidirectionally degrades single-stranded DNA into large acid-insoluble oligonucleotides, which are then degraded further into small acid-soluble oligonucleotides. This Geobacter sp. (strain M21) protein is Exodeoxyribonuclease 7 small subunit.